The following is a 333-amino-acid chain: tRNA dimethylallyltransferase (333 aa).

An ATP-binding site is contributed by glycine 16–threonine 23. Threonine 18–threonine 23 lines the substrate pocket. Interaction with substrate tRNA regions lie at residues aspartate 41 to leucine 44, glutamine 165 to arginine 169, and arginine 253 to arginine 258.

Belongs to the IPP transferase family. Monomer. It depends on Mg(2+) as a cofactor.

The enzyme catalyses adenosine(37) in tRNA + dimethylallyl diphosphate = N(6)-dimethylallyladenosine(37) in tRNA + diphosphate. Catalyzes the transfer of a dimethylallyl group onto the adenine at position 37 in tRNAs that read codons beginning with uridine, leading to the formation of N6-(dimethylallyl)adenosine (i(6)A). The polypeptide is tRNA dimethylallyltransferase (Polaromonas sp. (strain JS666 / ATCC BAA-500)).